The following is a 412-amino-acid chain: Membrane fusion protein MtrC (412 aa).

Residues 1 to 24 form the signal peptide; sequence MAFYASKAMRAAALAAAVALALSS. Cys25 carries the N-palmitoyl cysteine lipid modification. A lipid anchor (S-diacylglycerol cysteine) is attached at Cys25. Residues 377 to 412 are disordered; that stretch reads AKKVTPKEWAPSENQAAAPQAGVQTASEAKPASEAK. Positions 388-403 are enriched in polar residues; it reads SENQAAAPQAGVQTAS.

It belongs to the membrane fusion protein (MFP) (TC 8.A.1) family.

It localises to the cell inner membrane. Its function is as follows. Cell membrane lipoprotein, involved in cell membrane permeability to hydrophobic compounds such as antibiotics, dyes and detergents. The polypeptide is Membrane fusion protein MtrC (mtrC) (Neisseria gonorrhoeae).